Here is a 247-residue protein sequence, read N- to C-terminus: TLC domain-containing protein 1 (247 aa).

Residues 1–35 form the signal peptide; that stretch reads MPRLLHPALPLLLGATLTFRALRRALCRLPLPVHV. Topologically, residues 36–46 are extracellular; that stretch reads RADPLRTWRWH. A TLC domain is found at 40-234; sequence LRTWRWHNLL…LLRSDFCPEH (195 aa). Residues 47 to 67 form a helical membrane-spanning segment; sequence NLLVSFAHSIVSGIWALLCVW. The Cytoplasmic segment spans residues 68 to 83; the sequence is QTPDMLVEIETAWSLS. A helical transmembrane segment spans residues 84 to 104; the sequence is GYLLVCFSAGYFIHDTVDIVA. Topologically, residues 105–123 are extracellular; it reads SGQTRASWEYLVHHVMAMG. Residues 124 to 144 constitute an intramembrane region (helical); that stretch reads AFFSGIFWSSFVGGGVLTLLV. Residues 145–173 are Extracellular-facing; that stretch reads EVSNIFLTIRMMMKISNAQDHLLYRVNKY. The helical transmembrane segment at 174–194 threads the bilayer; the sequence is VNLVMYFLFRLAPQAYLTHFF. Topologically, residues 195–201 are cytoplasmic; it reads LRYVNQR. The chain crosses the membrane as a helical span at residues 202–222; sequence TLGTFLLGILLMLDVMIIIYF. Residues 223–247 are Extracellular-facing; sequence SRLLRSDFCPEHVPKKQHKDKFLTE.

It localises to the cell membrane. Its function is as follows. Regulates the composition and fluidity of the plasma membrane. Inhibits the incorporation of membrane-fluidizing phospholipids containing omega-3 long-chain polyunsaturated fatty acids (LCPUFA) and thereby promotes membrane rigidity. Does not appear to have any effect on LCPUFA synthesis. In Homo sapiens (Human), this protein is TLC domain-containing protein 1 (TLCD1).